We begin with the raw amino-acid sequence, 165 residues long: Disulfide bond formation protein B (165 aa).

Residues 1 to 16 (MTILNSLNQFSKGRLS) are Cytoplasmic-facing. A helical membrane pass occupies residues 17–33 (WLLLLLFVVFFEACALY). Topologically, residues 34–51 (FQHVMMLAPCVMCIYERV) are periplasmic. A disulfide bond links cysteine 43 and cysteine 46. Residues 52–67 (AMMGVGVAAIVGLMAP) form a helical membrane-spanning segment. Residues 68–74 (NNPIFRW) lie on the Cytoplasmic side of the membrane. The helical transmembrane segment at 75–92 (LGLIGWGLSSYKGLLLAQ) threads the bilayer. The Periplasmic segment spans residues 93–147 (QHVDYQFNPSPFATCDLFVTFPSWRPLNQWAPWIFEAYGDCSKIVWQFLDLSMPQ). Cysteines 107 and 133 form a disulfide. A helical transmembrane segment spans residues 148–165 (WLVVIFAGNLIALALIVI).

The protein belongs to the DsbB family.

It localises to the cell inner membrane. Functionally, required for disulfide bond formation in some periplasmic proteins. Acts by oxidizing the DsbA protein. The chain is Disulfide bond formation protein B from Vibrio alginolyticus.